The primary structure comprises 242 residues: Universal stress protein PHOS32 (242 aa).

The N-terminal 43 residues, Met-1–Thr-43, are a transit peptide targeting the chloroplast. The disordered stretch occupies residues Met-1 to Gly-45. Residues Lys-15–Ser-30 show a composition bias toward basic residues. Pro-19 lines the ATP pocket. At Ser-21 the chain carries Phosphoserine; by MAPK3 and MAPK6. Over residues Ser-31–Ala-44 the composition is skewed to low complexity. Residues Val-83, Gly-168–Arg-178, and Ser-186–Ser-188 contribute to the ATP site. Phosphoserine is present on Ser-219.

It belongs to the universal stress protein A family. In terms of processing, phosphorylated by MAPK3 and MAPK6 after pathogenic elicitation (e.g. bacterial flg22, Phytophthora infestans zoospores and xylanase).

The protein resides in the plastid. The protein localises to the chloroplast. This Arabidopsis thaliana (Mouse-ear cress) protein is Universal stress protein PHOS32.